The following is a 960-amino-acid chain: Isoleucine--tRNA ligase (960 aa).

The short motif at 82–92 is the 'HIGH' region element; sequence PYANGHIHIGH. Glutamate 606 contacts L-isoleucyl-5'-AMP. The 'KMSKS' region motif lies at 647 to 651; the sequence is KMSKS. Lysine 650 lines the ATP pocket. 4 residues coordinate Zn(2+): cysteine 931, cysteine 934, cysteine 951, and cysteine 954.

The protein belongs to the class-I aminoacyl-tRNA synthetase family. IleS type 1 subfamily. In terms of assembly, monomer. The cofactor is Zn(2+).

The protein localises to the cytoplasm. It carries out the reaction tRNA(Ile) + L-isoleucine + ATP = L-isoleucyl-tRNA(Ile) + AMP + diphosphate. Catalyzes the attachment of isoleucine to tRNA(Ile). As IleRS can inadvertently accommodate and process structurally similar amino acids such as valine, to avoid such errors it has two additional distinct tRNA(Ile)-dependent editing activities. One activity is designated as 'pretransfer' editing and involves the hydrolysis of activated Val-AMP. The other activity is designated 'posttransfer' editing and involves deacylation of mischarged Val-tRNA(Ile). The polypeptide is Isoleucine--tRNA ligase (Gluconobacter oxydans (strain 621H) (Gluconobacter suboxydans)).